Consider the following 348-residue polypeptide: MSPYITASLLFGLLLGPTITATSSHWLIAWMGLEINTLAIIPLMAQHHHPRAVEATTKYFLTQATAAAMLLFASTTNAWLTGQWELQQMTHPLPSTLIILALALKIGLAPLHTWLPEVLQGLDLTTGLILSTWQKLAPFALLLQLQPNNPTLLVILGVLSTLIGGWGGLNQTQLRKILAYSSIAHLGWMILILQFSPTLTLLTLMLYLIMTSSAFLTFILNKTTTINALATSWAKTPILTSLLPLVLLSLGGLPPLTGFMPKWLILQELTKHDLAPTATLAALSALLSLYFYLRLSYAMTLTIAPNNLTGTLPWRTQTTQPNMMTATMAASSILLLPMTPGILTLFNI.

A run of 9 helical transmembrane segments spans residues 1–21 (MSPYITASLLFGLLLGPTITA), 60–80 (FLTQATAAAMLLFASTTNAWL), 96–116 (TLIILALALKIGLAPLHTWLP), 149–169 (NPTLLVILGVLSTLIGGWGGL), 177–194 (ILAYSSIAHLGWMILILQ), 198–220 (TLTLLTLMLYLIMTSSAFLTFIL), 238–258 (ILTSLLPLVLLSLGGLPPLTG), 273–293 (DLAPTATLAALSALLSLYFYL), and 328–348 (MAASSILLLPMTPGILTLFNI).

The protein belongs to the complex I subunit 2 family.

It is found in the mitochondrion inner membrane. It catalyses the reaction a ubiquinone + NADH + 5 H(+)(in) = a ubiquinol + NAD(+) + 4 H(+)(out). Its function is as follows. Core subunit of the mitochondrial membrane respiratory chain NADH dehydrogenase (Complex I) that is believed to belong to the minimal assembly required for catalysis. Complex I functions in the transfer of electrons from NADH to the respiratory chain. The immediate electron acceptor for the enzyme is believed to be ubiquinone. The chain is NADH-ubiquinone oxidoreductase chain 2 (MT-ND2) from Tetraodon nigroviridis (Spotted green pufferfish).